Consider the following 331-residue polypeptide: MEIVGCRADESAYPFRPAAAMLFHGITGGHIQGIMEEMERRSKSADSRLAKSIQVNSRETRMPSLNPEKPTLCAGCGGKISDRYYLLAVDKQWHLRCLKCCECKLTLESELTCFAKDGSIYCKEDYYRFSVKRCARCHLGISASEMVMRARESVYHLSCFTCTTCNKTLSTGDQFGMKENLVYCRIHFELLVQGDFHQQLNYTELSAKGGGIAALPYFSNGTGTVQKGRPRKRKSPALGVDIMNYSSGCNENETDLDRDQTYPPSQKTKRMRTSFKHHQLRTMKSYFAINHNPDAKDLKQLAQKTGLTKRVLQGEQCSGFNSHTTRRLKIP.

2 consecutive LIM zinc-binding domains span residues 71–132 (TLCA…FSVK) and 133–194 (RCAR…LVQG). Residues 253–275 (ETDLDRDQTYPPSQKTKRMRTSF) are disordered. The segment at residues 268 to 327 (TKRMRTSFKHHQLRTMKSYFAINHNPDAKDLKQLAQKTGLTKRVLQGEQCSGFNSHTTRR) is a DNA-binding region (homeobox).

The protein localises to the nucleus. May be involved in gonadal development. The protein is LIM/homeobox protein Lhx9 (lhx9) of Xenopus laevis (African clawed frog).